The following is a 688-amino-acid chain: DNA ligase (688 aa).

Residues 38 to 42, 87 to 88, and E118 contribute to the NAD(+) site; these read DEEYD and SL. K120 functions as the N6-AMP-lysine intermediate in the catalytic mechanism. NAD(+)-binding residues include R141, E175, K291, and K315. C409, C412, C428, and C433 together coordinate Zn(2+). Residues 590–679 enclose the BRCT domain; the sequence is VKLDILRGLT…AELKGYNFDE (90 aa).

It belongs to the NAD-dependent DNA ligase family. LigA subfamily. Requires Mg(2+) as cofactor. It depends on Mn(2+) as a cofactor.

The enzyme catalyses NAD(+) + (deoxyribonucleotide)n-3'-hydroxyl + 5'-phospho-(deoxyribonucleotide)m = (deoxyribonucleotide)n+m + AMP + beta-nicotinamide D-nucleotide.. Functionally, DNA ligase that catalyzes the formation of phosphodiester linkages between 5'-phosphoryl and 3'-hydroxyl groups in double-stranded DNA using NAD as a coenzyme and as the energy source for the reaction. It is essential for DNA replication and repair of damaged DNA. The protein is DNA ligase of Thermotoga maritima (strain ATCC 43589 / DSM 3109 / JCM 10099 / NBRC 100826 / MSB8).